The following is a 469-amino-acid chain: Threonine synthase (469 aa).

K112 is subject to N6-(pyridoxal phosphate)lysine.

This sequence belongs to the threonine synthase family. The cofactor is pyridoxal 5'-phosphate.

It catalyses the reaction O-phospho-L-homoserine + H2O = L-threonine + phosphate. The protein operates within amino-acid biosynthesis; L-threonine biosynthesis; L-threonine from L-aspartate: step 5/5. Functionally, catalyzes the gamma-elimination of phosphate from L-phosphohomoserine and the beta-addition of water to produce L-threonine. This is Threonine synthase (thrC) from Pseudomonas aeruginosa (strain ATCC 15692 / DSM 22644 / CIP 104116 / JCM 14847 / LMG 12228 / 1C / PRS 101 / PAO1).